The primary structure comprises 258 residues: Trans-aconitate 2-methyltransferase (258 aa).

This sequence belongs to the methyltransferase superfamily. Tam family.

The protein localises to the cytoplasm. It catalyses the reaction trans-aconitate + S-adenosyl-L-methionine = (E)-3-(methoxycarbonyl)pent-2-enedioate + S-adenosyl-L-homocysteine. Functionally, catalyzes the S-adenosylmethionine monomethyl esterification of trans-aconitate. This is Trans-aconitate 2-methyltransferase from Yersinia pestis bv. Antiqua (strain Antiqua).